Here is a 160-residue protein sequence, read N- to C-terminus: SsrA-binding protein (160 aa).

Belongs to the SmpB family.

Its subcellular location is the cytoplasm. Its function is as follows. Required for rescue of stalled ribosomes mediated by trans-translation. Binds to transfer-messenger RNA (tmRNA), required for stable association of tmRNA with ribosomes. tmRNA and SmpB together mimic tRNA shape, replacing the anticodon stem-loop with SmpB. tmRNA is encoded by the ssrA gene; the 2 termini fold to resemble tRNA(Ala) and it encodes a 'tag peptide', a short internal open reading frame. During trans-translation Ala-aminoacylated tmRNA acts like a tRNA, entering the A-site of stalled ribosomes, displacing the stalled mRNA. The ribosome then switches to translate the ORF on the tmRNA; the nascent peptide is terminated with the 'tag peptide' encoded by the tmRNA and targeted for degradation. The ribosome is freed to recommence translation, which seems to be the essential function of trans-translation. The protein is SsrA-binding protein of Escherichia coli O6:K15:H31 (strain 536 / UPEC).